The primary structure comprises 535 residues: Flavonoid 3'-monooxygenase CYP75B4 (535 aa).

The helical transmembrane segment at 8–28 (ISTSLLLTTVALSVIVCYALV) threads the bilayer. Cys-469 contacts heme.

It belongs to the cytochrome P450 family. Requires heme as cofactor.

The protein localises to the membrane. It catalyses the reaction a 3'-unsubstituted flavone + reduced [NADPH--hemoprotein reductase] + O2 = a 3'-hydroxyflavone + oxidized [NADPH--hemoprotein reductase] + H2O + H(+). It participates in secondary metabolite biosynthesis; flavonoid biosynthesis. Its function is as follows. Catalyzes the 3'-hydroxylation of the flavonoid B-ring to the 3',4'-hydroxylated state. Catalyzes in vitro 3'-hydroxylation of different flavonoids. Catalyzes the conversion of apigenin to luteolin, naringenin to eriodictyol, and kaempferol to quercetin. Possesses specific 5'-hydroxylase activity toward chrysoeriol (a 3'-methoxylated flavone) and is indispensable for tricin formation. Converts chrysoeriol to selgin, a precursor of tricin, suggesting that chrysoeriol, instead of tricetin, is an intermediate in tricin biosynthesis. The protein is Flavonoid 3'-monooxygenase CYP75B4 of Oryza sativa subsp. japonica (Rice).